A 276-amino-acid polypeptide reads, in one-letter code: MKGQILREMKVQPAIEASYEVERRIAFIKLKLKESHTQTLVLGISGGVDSSLAGKLCQLAVEQLNEETSSELYQFIAVRLPYHVQKDEDEAQLACQFISPSKLVTVNIHDGVSGVHQETLSGLTSAGIEVCDSTKLDFVKGNVKARMRMIAQYEIAGLTGGLVVGTDHSAENITGFYTKWGDGACDLAPLFGLNKRQVRQLAAYLGAPAVLVEKAPTADLEEDKPQLEDEVALGLTYEQIDDFLEGKAVDSYVEDRLIGIYKATQHKREAIPTIYD.

An ATP-binding site is contributed by 43 to 50 (GISGGVDS). Asp-49 is a Mg(2+) binding site. Arg-146 provides a ligand contact to deamido-NAD(+). Position 166 (Thr-166) interacts with ATP. Mg(2+) is bound at residue Glu-171. Positions 179 and 186 each coordinate deamido-NAD(+). 2 residues coordinate ATP: Lys-195 and Thr-217. 266 to 267 (HK) serves as a coordination point for deamido-NAD(+).

It belongs to the NAD synthetase family. In terms of assembly, homodimer.

It catalyses the reaction deamido-NAD(+) + NH4(+) + ATP = AMP + diphosphate + NAD(+) + H(+). Its pathway is cofactor biosynthesis; NAD(+) biosynthesis; NAD(+) from deamido-NAD(+) (ammonia route): step 1/1. Catalyzes the ATP-dependent amidation of deamido-NAD to form NAD. Uses ammonia as a nitrogen source. This Shewanella woodyi (strain ATCC 51908 / MS32) protein is NH(3)-dependent NAD(+) synthetase.